The primary structure comprises 130 residues: Small ribosomal subunit protein uS8 (130 aa).

The protein belongs to the universal ribosomal protein uS8 family. In terms of assembly, part of the 30S ribosomal subunit. Contacts proteins S5 and S12.

Its function is as follows. One of the primary rRNA binding proteins, it binds directly to 16S rRNA central domain where it helps coordinate assembly of the platform of the 30S subunit. This Sodalis glossinidius (strain morsitans) protein is Small ribosomal subunit protein uS8.